The following is an 896-amino-acid chain: Alanine--tRNA ligase (896 aa).

4 residues coordinate Zn(2+): H580, H584, C683, and H687.

This sequence belongs to the class-II aminoacyl-tRNA synthetase family. It depends on Zn(2+) as a cofactor.

It is found in the cytoplasm. It carries out the reaction tRNA(Ala) + L-alanine + ATP = L-alanyl-tRNA(Ala) + AMP + diphosphate. Catalyzes the attachment of alanine to tRNA(Ala) in a two-step reaction: alanine is first activated by ATP to form Ala-AMP and then transferred to the acceptor end of tRNA(Ala). Also edits incorrectly charged Ser-tRNA(Ala) and Gly-tRNA(Ala) via its editing domain. The protein is Alanine--tRNA ligase of Mycolicibacterium smegmatis (strain ATCC 700084 / mc(2)155) (Mycobacterium smegmatis).